The following is a 608-amino-acid chain: MSEWESYYKTEGEEEEEEEESPDTGGEYKYSGRDSLIFLVDASRAMFESQGEDELTPFDMSIQCIQSVYTSKIISSDRDLLAVVFYGTEKDKNSVNFKNIYVLQDLDNPGAKRVLELDQFKGQQGKKHFRDTVGHGSDYSLSEVLWVCANLFSDVQLKMSHKRIMLFTNEDDPHGRDSAKASRARTKASDLRDTGIFLDLMHLKKPGGFDVSVFYRDIITTAEDEDLGVHFEESSKLEDLLRKVRAKETKKRVLSRLKFKLGEDVVLMVGIYNLVQKANKPFPVRLYRETNEPVKTKTRTFNVNTGSLLLPSDTKRSLTYGTRQIVLEKEETEELKRFDEPGLILMGFKPTVMLKKQHYLRPSLFVYPEESLVSGSSTLFSALLTKCVEKKVIAVCRYTPRKNVSPYFVALVPQEEELDDQNIQVTPGGFQLVFLPYADDKRKVPFTEKVTANQEQIDKMKAIVQKLRFTYRSDSFENPVLQQHFRNLEALALDMMESEQVVDLTLPKVEAIKKRLGSLADEFKELVYPPGYNPEGKVAKRKQDDEGSTSKKPKVELSEEELKAHFRKGTLGKLTVPTLKDICKAHGLKSGPKKQELLDALIRHLEKN.

Residues Met1–Glu11 show a composition bias toward basic and acidic residues. The tract at residues Met1–Lys29 is disordered. Ser2 carries the N-acetylserine modification. Phosphoserine is present on Ser2. Position 6 is a phosphoserine; by PRKDC (Ser6). A compositionally biased stretch (acidic residues) spans Gly12–Pro22. Residue Lys29 is the Schiff-base intermediate with DNA; for 5'-deoxyribose-5-phosphate lyase activity of the active site. N6-acetyllysine is present on Lys29. A Phosphoserine; by PRKDC modification is found at Ser49. The 208-residue stretch at Phe259–Lys466 folds into the Ku domain. The DNA-binding stretch occupies residues Val275–Asp339. Residue Lys315 forms a Glycyl lysine isopeptide (Lys-Gly) (interchain with G-Cter in SUMO2) linkage. An N6-acetyllysine mark is found at Lys329, Lys336, and Lys459. The interaction with XRCC5 stretch occupies residues Ser371 to Val480. 3 positions are modified to phosphoserine: Ser475, Ser518, and Ser548. A disordered region spans residues Pro534–Leu557. Positions Lys537–Leu557 are enriched in basic and acidic residues. An interaction with DEAF1 region spans residues Ser548 to Lys607. Lys554 participates in a covalent cross-link: Glycyl lysine isopeptide (Lys-Gly) (interchain with G-Cter in SUMO2). Ser558 is subject to Phosphoserine. Lys568 bears the N6,N6,N6-trimethyllysine mark. In terms of domain architecture, SAP spans Leu571 to Leu605. The interaction with BAX stretch occupies residues Val576–Asp581.

It belongs to the ku70 family. In terms of assembly, heterodimer composed of XRCC5/Ku80 and XRCC6/Ku70. Component of the core long-range non-homologous end joining (NHEJ) complex (also named DNA-PK complex) composed of PRKDC, LIG4, XRCC4, XRCC6/Ku70, XRCC5/Ku86 and NHEJ1/XLF. Additional component of the NHEJ complex includes PAXX. Following autophosphorylation, PRKDC dissociates from DNA, leading to formation of the short-range NHEJ complex, composed of LIG4, XRCC4, XRCC6/Ku70, XRCC5/Ku86 and NHEJ1/XLF. The XRCC5-XRCC6 dimer also associates with NAA15, and this complex binds to the osteocalcin promoter and activates osteocalcin expression. In addition, XRCC6 interacts with the osteoblast-specific transcription factors MSX2, RUNX2 and DLX5. Interacts with ELF3. Interacts with ATP23. The XRCC5-XRRC6 dimer associates in a DNA-dependent manner with APEX1. Binds to CDK9. Identified in a complex with DEAF1 and XRCC5. Interacts with DEAF1 (via the SAND domain); the interaction is direct and may be inhibited by DNA-binding. Interacts with CLU. Interacts with NR4A3; the DNA-dependent protein kinase complex DNA-PK phosphorylates and activates NR4A3 and prevents NR4A3 ubiquitinylation and degradation. Interacts with CYREN (via KBM motif). Interacts (via N-terminus) with HSF1 (via N-terminus); this interaction is direct and prevents XRCC5/XRCC6 heterodimeric binding and non-homologous end joining (NHEJ) repair activities induced by ionizing radiation (IR). Part of the HDP-RNP complex composed of at least HEXIM1, PRKDC, XRCC5, XRCC6, paraspeckle proteins (SFPQ, NONO, PSPC1, RBM14, and MATR3) and NEAT1 RNA. Interacts with HMBOX1. Interacts with ATF7. Interacts with APLF (via KBM motif). Interacts with WRN (via KBM motif). The XRCC5-XRCC6 dimer associates with ALKBH2. Interacts with TPRN; TPRN interacts with a number of DNA damage response proteins, is recruited to sites of DNA damage and may play a role in DNA damage repair. When not acetylated, interacts with BAX. Interacts with ERCC6L2. Post-translationally, phosphorylation by PRKDC may enhance helicase activity. Phosphorylation of Ser-49 does not affect DNA repair. ADP-ribosylated by PARP3. In terms of processing, methylation by SETD4 leads to accumulation in the cytoplasm and is a prerequisite for acetylation, possibly due to the change of subcellular from the nucleus to the cytosol initiated by methylation, acetylation occurring in the cytosol. Post-translationally, acetylation can be catalyzed in vitro by CREBBP/CBP and KAT2B/PCAF.

It is found in the nucleus. Its subcellular location is the chromosome. The protein localises to the cytoplasm. Functionally, single-stranded DNA-dependent ATP-dependent helicase that plays a key role in DNA non-homologous end joining (NHEJ) by recruiting DNA-PK to DNA. Required for double-strand break repair and V(D)J recombination. Also has a role in chromosome translocation. Has a role in chromosome translocation. The DNA helicase II complex binds preferentially to fork-like ends of double-stranded DNA in a cell cycle-dependent manner. It works in the 3'-5' direction. During NHEJ, the XRCC5-XRRC6 dimer performs the recognition step: it recognizes and binds to the broken ends of the DNA and protects them from further resection. Binding to DNA may be mediated by XRCC6. The XRCC5-XRRC6 dimer acts as a regulatory subunit of the DNA-dependent protein kinase complex DNA-PK by increasing the affinity of the catalytic subunit PRKDC to DNA by 100-fold. The XRCC5-XRRC6 dimer is probably involved in stabilizing broken DNA ends and bringing them together. The assembly of the DNA-PK complex to DNA ends is required for the NHEJ ligation step. Probably also acts as a 5'-deoxyribose-5-phosphate lyase (5'-dRP lyase), by catalyzing the beta-elimination of the 5' deoxyribose-5-phosphate at an abasic site near double-strand breaks. 5'-dRP lyase activity allows to 'clean' the termini of abasic sites, a class of nucleotide damage commonly associated with strand breaks, before such broken ends can be joined. The XRCC5-XRRC6 dimer together with APEX1 acts as a negative regulator of transcription. In association with NAA15, the XRCC5-XRRC6 dimer binds to the osteocalcin promoter and activates osteocalcin expression. Plays a role in the regulation of DNA virus-mediated innate immune response by assembling into the HDP-RNP complex, a complex that serves as a platform for IRF3 phosphorylation and subsequent innate immune response activation through the cGAS-STING pathway. Negatively regulates apoptosis by interacting with BAX and sequestering it from the mitochondria. Might have deubiquitination activity, acting on BAX. The polypeptide is X-ray repair cross-complementing protein 6 (Xrcc6) (Mus musculus (Mouse)).